Consider the following 185-residue polypeptide: Potassium-transporting ATPase KdpC subunit (185 aa).

A helical transmembrane segment spans residues 14-34 (ALSLLTGVAYPLALTGIAAVI).

This sequence belongs to the KdpC family. The system is composed of three essential subunits: KdpA, KdpB and KdpC.

It localises to the cell inner membrane. Functionally, part of the high-affinity ATP-driven potassium transport (or Kdp) system, which catalyzes the hydrolysis of ATP coupled with the electrogenic transport of potassium into the cytoplasm. This subunit acts as a catalytic chaperone that increases the ATP-binding affinity of the ATP-hydrolyzing subunit KdpB by the formation of a transient KdpB/KdpC/ATP ternary complex. The protein is Potassium-transporting ATPase KdpC subunit of Cereibacter sphaeroides (strain KD131 / KCTC 12085) (Rhodobacter sphaeroides).